We begin with the raw amino-acid sequence, 398 residues long: Phosphoglycerate kinase (398 aa).

Substrate-binding positions include 23-25 (DFN), Arg-38, 61-64 (HLGK), Arg-122, and Arg-155. ATP is bound by residues Lys-206, Gly-297, Glu-328, and 354-357 (GGDS).

It belongs to the phosphoglycerate kinase family. In terms of assembly, monomer.

Its subcellular location is the cytoplasm. The enzyme catalyses (2R)-3-phosphoglycerate + ATP = (2R)-3-phospho-glyceroyl phosphate + ADP. The protein operates within carbohydrate degradation; glycolysis; pyruvate from D-glyceraldehyde 3-phosphate: step 2/5. This Clostridium novyi (strain NT) protein is Phosphoglycerate kinase.